An 824-amino-acid polypeptide reads, in one-letter code: AMP deaminase 2 (824 aa).

The segment at 1–43 (MASYPGPGKSKAKYPFKKRAGLQASAAAPEARSGLGASPLQSA) is disordered. The segment covering 10-20 (SKAKYPFKKRA) has biased composition (basic residues). Arginine 44 is subject to Omega-N-methylarginine. Residues serine 45, serine 63, and serine 79 each carry the phosphoserine modification. Tyrosine 90 is modified (phosphotyrosine). A phosphoserine mark is found at serine 96 and serine 113. A Phosphothreonine modification is found at threonine 133. Phosphoserine occurs at positions 135 and 137. Residues histidine 364 and histidine 366 each coordinate Zn(2+). Substrate contacts are provided by residues histidine 366 and 435–440 (KFNAKY). Histidine 633 contributes to the Zn(2+) binding site. Glutamate 636 serves as a coordination point for substrate. Histidine 655 serves as the catalytic Proton acceptor. A Zn(2+)-binding site is contributed by aspartate 710. 711–714 (DPLQ) is a substrate binding site.

This sequence belongs to the metallo-dependent hydrolases superfamily. Adenosine and AMP deaminases family. In terms of assembly, homotetramer. It depends on Zn(2+) as a cofactor.

It carries out the reaction AMP + H2O + H(+) = IMP + NH4(+). The protein operates within purine metabolism; IMP biosynthesis via salvage pathway; IMP from AMP: step 1/1. Its function is as follows. AMP deaminase plays a critical role in energy metabolism. Catalyzes the deamination of AMP to IMP and plays an important role in the purine nucleotide cycle. The protein is AMP deaminase 2 of Mus musculus (Mouse).